A 740-amino-acid polypeptide reads, in one-letter code: Isocitrate dehydrogenase [NADP] 2 (740 aa).

The NADP(+) site is built by Asn83 and Ser85. D-threo-isocitrate is bound by residues Ser130, Asn133, Arg137, Arg143, and Lys253. Residue Asn133 coordinates NADP(+). Position 348 (Asp348) interacts with Mg(2+). 2 residues coordinate D-threo-isocitrate: Tyr418 and Arg546. The Mg(2+) site is built by Asp547 and Asp551. NADP(+) contacts are provided by Ser584, His588, Arg599, Asp601, and Arg648.

This sequence belongs to the monomeric-type IDH family. As to quaternary structure, monomer. Mg(2+) serves as cofactor. Mn(2+) is required as a cofactor.

The catalysed reaction is D-threo-isocitrate + NADP(+) = 2-oxoglutarate + CO2 + NADPH. Its activity is regulated as follows. IDH activity is not significantly affected by monovalent cations. The combined addition of Mn(2+) and another divalent cation results in the decrease of the activity. Functionally, catalyzes the oxidative decarboxylation of isocitrate to 2-oxoglutarate and carbon dioxide with the concomitant reduction of NADP(+). Cannot use NAD(+). In Psychrobacter sp. (strain 13A), this protein is Isocitrate dehydrogenase [NADP] 2.